The chain runs to 476 residues: Ribulose bisphosphate carboxylase large chain (476 aa).

Positions M1–S2 are excised as a propeptide. The residue at position 3 (P3) is an N-acetylproline. At K14 the chain carries N6,N6,N6-trimethyllysine. N123 and T173 together coordinate substrate. Residue K175 is the Proton acceptor of the active site. K177 contributes to the substrate binding site. Residues K201, D203, and E204 each coordinate Mg(2+). An N6-carboxylysine modification is found at K201. H294 functions as the Proton acceptor in the catalytic mechanism. Positions 295, 327, and 379 each coordinate substrate.

It belongs to the RuBisCO large chain family. Type I subfamily. In terms of assembly, heterohexadecamer of 8 large chains and 8 small chains; disulfide-linked. The disulfide link is formed within the large subunit homodimers. The cofactor is Mg(2+). In terms of processing, the disulfide bond which can form in the large chain dimeric partners within the hexadecamer appears to be associated with oxidative stress and protein turnover.

The protein localises to the plastid. It localises to the chloroplast. The catalysed reaction is 2 (2R)-3-phosphoglycerate + 2 H(+) = D-ribulose 1,5-bisphosphate + CO2 + H2O. It catalyses the reaction D-ribulose 1,5-bisphosphate + O2 = 2-phosphoglycolate + (2R)-3-phosphoglycerate + 2 H(+). In terms of biological role, ruBisCO catalyzes two reactions: the carboxylation of D-ribulose 1,5-bisphosphate, the primary event in carbon dioxide fixation, as well as the oxidative fragmentation of the pentose substrate in the photorespiration process. Both reactions occur simultaneously and in competition at the same active site. This Arenaria drummondii (Drummond sandwort) protein is Ribulose bisphosphate carboxylase large chain.